We begin with the raw amino-acid sequence, 348 residues long: Fructose-1,6-bisphosphatase class 1 (348 aa).

Residues E92, D111, L113, and D114 each coordinate Mg(2+). Residues D114–S117 and N204 contribute to the substrate site. Mg(2+) is bound at residue E276.

The protein belongs to the FBPase class 1 family. Homotetramer. It depends on Mg(2+) as a cofactor.

The protein localises to the cytoplasm. The catalysed reaction is beta-D-fructose 1,6-bisphosphate + H2O = beta-D-fructose 6-phosphate + phosphate. The protein operates within carbohydrate biosynthesis; gluconeogenesis. The protein is Fructose-1,6-bisphosphatase class 1 of Methylorubrum populi (strain ATCC BAA-705 / NCIMB 13946 / BJ001) (Methylobacterium populi).